Reading from the N-terminus, the 158-residue chain is Transcription elongation factor GreA (158 aa).

The protein belongs to the GreA/GreB family.

Functionally, necessary for efficient RNA polymerase transcription elongation past template-encoded arresting sites. The arresting sites in DNA have the property of trapping a certain fraction of elongating RNA polymerases that pass through, resulting in locked ternary complexes. Cleavage of the nascent transcript by cleavage factors such as GreA or GreB allows the resumption of elongation from the new 3'terminus. GreA releases sequences of 2 to 3 nucleotides. This chain is Transcription elongation factor GreA, found in Rhizobium leguminosarum bv. trifolii (strain WSM2304).